A 151-amino-acid chain; its full sequence is Exosporium protein B (151 aa).

The protein localises to the spore wall. In Clostridium sporogenes (strain ATCC 15579), this protein is Exosporium protein B.